Consider the following 417-residue polypeptide: uncharacterized protein (417 aa).

4 helical membrane passes run 87–107 (LVVA…GYWI), 130–150 (IAGT…TPSV), 177–197 (FFIT…VYAA), and 202–222 (IIDT…LWPD). Positions 366–398 (APSAPAAAEHKATSSSNSSNSSPGSSNPTTAPT) are enriched in low complexity. The tract at residues 366–417 (APSAPAAAEHKATSSSNSSNSSPGSSNPTTAPTDKFRTGSPKTQPEKISAFW) is disordered.

Belongs to the YccS/YhfK family.

The protein resides in the cell membrane. This is an uncharacterized protein from Neisseria gonorrhoeae.